Here is a 110-residue protein sequence, read N- to C-terminus: Protein RnfH (110 aa).

Residues 90-110 form a disordered region; sequence VDKTRREGSIEGRKWLPKDSR.

This sequence belongs to the UPF0125 (RnfH) family.

In Burkholderia mallei (strain NCTC 10229), this protein is Protein RnfH.